A 576-amino-acid chain; its full sequence is Formate--tetrahydrofolate ligase 1 (576 aa).

Position 69-76 (69-76 (TPLGEGKT)) interacts with ATP.

This sequence belongs to the formate--tetrahydrofolate ligase family.

It catalyses the reaction (6S)-5,6,7,8-tetrahydrofolate + formate + ATP = (6R)-10-formyltetrahydrofolate + ADP + phosphate. It participates in one-carbon metabolism; tetrahydrofolate interconversion. The chain is Formate--tetrahydrofolate ligase 1 from Rubrobacter xylanophilus (strain DSM 9941 / JCM 11954 / NBRC 16129 / PRD-1).